The primary structure comprises 191 residues: CASP-like protein 4C3 (191 aa).

Topologically, residues 1-29 are cytoplasmic; sequence METGDSAVKSSQDVHYYGKSTAQKHRRSN. A helical membrane pass occupies residues 30 to 50; the sequence is GIILIFRALTFSFSLTSVIVM. Topologically, residues 51–72 are extracellular; it reads GTNRHRIDAQSRVAWYDFDPFR. Residues 73–93 form a helical membrane-spanning segment; it reads YVLAVNAIICIYSFVEIWLAV. Residues 94 to 116 lie on the Cytoplasmic side of the membrane; it reads YTYLKDTLFLPETFQVWFDYGHD. Residues 117 to 137 form a helical membrane-spanning segment; sequence QGFAYLLFSANSAGIAMAQLL. At 138–162 the chain is on the extracellular side; it reads QSGNSLIHGAYRCSDAGVFCTQARA. A helical transmembrane segment spans residues 163 to 183; the sequence is SIGLGFGAFLFLALSSLLTGL. The Cytoplasmic portion of the chain corresponds to 184 to 191; that stretch reads RVARWYFS.

It belongs to the Casparian strip membrane proteins (CASP) family. Homodimer and heterodimers.

It is found in the cell membrane. This Physcomitrium patens (Spreading-leaved earth moss) protein is CASP-like protein 4C3.